An 877-amino-acid chain; its full sequence is Telomere length regulation protein clk-2 (877 aa).

The segment covering 488–501 (NKDSAAITSKNNLR) has biased composition (polar residues). The interval 488-509 (NKDSAAITSKNNLRLDSDDDED) is disordered.

The protein belongs to the TEL2 family.

It is found in the nucleus. The protein localises to the chromosome. The protein resides in the telomere. Functionally, DNA damage checkpoint protein required for DNA damage-induced cell cycle arrest and apoptosis, thereby playing a role in genome stability. Regulator of telomere length. In Caenorhabditis elegans, this protein is Telomere length regulation protein clk-2 (clk-2).